The sequence spans 1228 residues: Calcium-transporting ATPase (1228 aa).

Residues 1–63 (MEEVIKNAHT…FELILNQFDD (63 aa)) lie on the Cytoplasmic side of the membrane. A helical transmembrane segment spans residues 64–81 (LLVKILLLAAFISFVLTL). Residues 82-92 (LDMKHKKIEIC) are Extracellular-facing. A helical transmembrane segment spans residues 93–112 (DFIEPLVIVLILILNAAVGV). Topologically, residues 113 to 270 (WQECNAEKSL…IDLFGQQLSK (158 aa)) are cytoplasmic. A helical transmembrane segment spans residues 271–291 (IIFVICVTVWIINFKHFSDPI). Residues 292–300 (HGSFLYGCL) are Extracellular-facing. Residues 301–321 (YYFKISVALAVAAIPEGLPAV) form a helical membrane-spanning segment. Topologically, residues 322–974 (ITTCLALGTR…IYNNMKAFIR (653 aa)) are cytoplasmic. The active-site 4-aspartylphosphate intermediate is the Asp-358. Disordered regions lie at residues 452–478 (MKND…IPLK) and 562–613 (MPAE…LKNA). The span at 589-604 (FFSSKNDNSHITSTLN) shows a compositional bias: polar residues. Lys-716 serves as a coordination point for ATP. Residues 975–994 (YLISSNIGEVASIFITALLG) form a helical membrane-spanning segment. The Extracellular segment spans residues 995–1000 (IPDSLA). Residues 1001–1021 (PVQLLWVNLVTDGLPATALGF) traverse the membrane as a helical segment. The Cytoplasmic portion of the chain corresponds to 1022–1042 (NPPEHDVMKCKPRHKNDNLIN). Residues 1043-1067 (GLTLLRYIIIGTYVGIATVSIFVYW) traverse the membrane as a helical segment. At 1068-1118 (FLFYPDSDMHTLINFYQLSHYNQCKAWNNFRVNKVYDMSEDHCSYFSAGKI) the chain is on the extracellular side. Residues 1119-1140 (KASTLSLSVLVLIEMFNALNAL) traverse the membrane as a helical segment. At 1141 to 1151 (SEYNSLFEIPP) the chain is on the cytoplasmic side. Residues 1152–1172 (WRNMYLVLATIGSLLLHVLIL) form a helical membrane-spanning segment. The Extracellular segment spans residues 1173–1185 (YIPPLARIFGVVP). A helical membrane pass occupies residues 1186-1206 (LSAYDWFLVFLWSFPVIILDE). Residues 1207 to 1228 (IIKFYAKRKLKEEQRTKKIKID) lie on the Cytoplasmic side of the membrane.

It belongs to the cation transport ATPase (P-type) (TC 3.A.3) family.

It is found in the membrane. It carries out the reaction Ca(2+)(in) + ATP + H2O = Ca(2+)(out) + ADP + phosphate + H(+). In terms of biological role, this magnesium-dependent enzyme catalyzes the hydrolysis of ATP coupled with the transport of the calcium. The polypeptide is Calcium-transporting ATPase (ATP6) (Plasmodium falciparum (isolate K1 / Thailand)).